The chain runs to 834 residues: Periplasmic nitrate reductase (834 aa).

A signal peptide (tat-type signal) is located at residues 1-29; that stretch reads MSLTRRQFAKANAAAIAATVAGMPIASTA. The 4Fe-4S Mo/W bis-MGD-type domain occupies 41-97; that stretch reads LKWDKAPCRFCGTGCGVMVATRENRVVATHGDVKADVNRGINCVKGYFLSKIMYGTD. Positions 48, 51, 55, and 83 each coordinate [4Fe-4S] cluster. Residues K85, Q152, N177, C181, 214-221, 245-249, 264-266, M375, Q379, N485, 511-512, K534, D561, and 721-730 contribute to the Mo-bis(molybdopterin guanine dinucleotide) site; these read WGSNMAEM, STFEH, QTD, SD, and TGRVLEHWHT. F797 is a substrate binding site. Mo-bis(molybdopterin guanine dinucleotide) contacts are provided by N805 and K822.

It belongs to the prokaryotic molybdopterin-containing oxidoreductase family. NasA/NapA/NarB subfamily. As to quaternary structure, component of the periplasmic nitrate reductase NapAB complex composed of NapA and NapB. [4Fe-4S] cluster serves as cofactor. Mo-bis(molybdopterin guanine dinucleotide) is required as a cofactor. Predicted to be exported by the Tat system. The position of the signal peptide cleavage has not been experimentally proven.

It is found in the periplasm. The enzyme catalyses 2 Fe(II)-[cytochrome] + nitrate + 2 H(+) = 2 Fe(III)-[cytochrome] + nitrite + H2O. Functionally, catalytic subunit of the periplasmic nitrate reductase complex NapAB. Receives electrons from NapB and catalyzes the reduction of nitrate to nitrite. The protein is Periplasmic nitrate reductase of Stutzerimonas stutzeri (Pseudomonas stutzeri).